Here is a 367-residue protein sequence, read N- to C-terminus: NADH-quinone oxidoreductase subunit D (367 aa).

The protein belongs to the complex I 49 kDa subunit family. In terms of assembly, NDH-1 is composed of 14 different subunits. Subunits NuoB, C, D, E, F, and G constitute the peripheral sector of the complex.

It is found in the cell membrane. The enzyme catalyses a quinone + NADH + 5 H(+)(in) = a quinol + NAD(+) + 4 H(+)(out). In terms of biological role, NDH-1 shuttles electrons from NADH, via FMN and iron-sulfur (Fe-S) centers, to quinones in the respiratory chain. The immediate electron acceptor for the enzyme in this species is believed to be a menaquinone. Couples the redox reaction to proton translocation (for every two electrons transferred, four hydrogen ions are translocated across the cytoplasmic membrane), and thus conserves the redox energy in a proton gradient. The sequence is that of NADH-quinone oxidoreductase subunit D from Geobacillus kaustophilus (strain HTA426).